Reading from the N-terminus, the 168-residue chain is Disulfide bond formation protein B 1 (168 aa).

Residues 1–14 lie on the Cytoplasmic side of the membrane; the sequence is MNEQTSRLNRERRF. Residues 15–31 traverse the membrane as a helical segment; sequence LVLLGLICLSLIGGALY. The Periplasmic segment spans residues 32-49; that stretch reads MQVVLGEAPCPLCILQRY. Residues Cys41 and Cys44 are joined by a disulfide bond. The chain crosses the membrane as a helical span at residues 50–65; sequence ALLFIAVFAFIAAAMP. Residues 66–72 lie on the Cytoplasmic side of the membrane; that stretch reads GRRSLTF. Residues 73-89 form a helical membrane-spanning segment; that stretch reads FEALVVLSAIGGIVAAG. The Periplasmic segment spans residues 90-144; it reads NHVYILANPMVSCGIDTLQPIVDDLPLAKLWPLAFQVDGFCSTPYPPILGLSLAQ. The cysteines at positions 102 and 130 are disulfide-linked. Residues 145-163 traverse the membrane as a helical segment; it reads WALVAFVLTAVLVPLGIYR. The Cytoplasmic segment spans residues 164 to 168; that stretch reads NRRQA.

It belongs to the DsbB family.

It is found in the cell inner membrane. Its function is as follows. Required for disulfide bond formation in some periplasmic proteins. Acts by oxidizing the DsbA protein. This chain is Disulfide bond formation protein B 1 (dsbB1), found in Pseudomonas putida (strain ATCC 47054 / DSM 6125 / CFBP 8728 / NCIMB 11950 / KT2440).